The primary structure comprises 415 residues: Sucrose permease (415 aa).

At 1 to 16 (MALNIPFRNAYYRFAS) the chain is on the cytoplasmic side. A helical transmembrane segment spans residues 17-37 (SYSFLFFISWSLWWSLYAIWL). At 38-48 (KGHLGLTGTEL) the chain is on the periplasmic side. A helical transmembrane segment spans residues 49–69 (GTLYSVNQFTSILFMMFYGIV). Over 70–77 (QDKLGLKK) the chain is Cytoplasmic. A helical transmembrane segment spans residues 78-98 (PLIWCMSFILVLTGPFMIYVY). At 99-107 (EPLLQSNFS) the chain is on the periplasmic side. The helical transmembrane segment at 108–128 (VGLILGALFFGLGYLAGCGLL) threads the bilayer. At 129 to 147 (DSFTEKMARNFHFEYGTAR) the chain is on the cytoplasmic side. Residues 148 to 167 (AWGSFGYAIGAFFAGIFFSI) form a helical membrane-spanning segment. Over 168–170 (SPH) the chain is Periplasmic. The chain crosses the membrane as a helical span at residues 171-190 (INFWLVSLFGAVFMMINMRF). At 191–220 (KDKDHQCIAADAGGVKKEDFIAVFKDRNFW) the chain is on the cytoplasmic side. Residues 221–241 (VFVIFIVGTWSFYNIFDQQLF) form a helical membrane-spanning segment. Residues 242–260 (PVFYAGLFESHDVGTRLYG) are Periplasmic-facing. Residues 261 to 281 (YLNSFQVVLEALCMAIIPFFV) form a helical membrane-spanning segment. Residues 282 to 287 (NRVGPK) lie on the Cytoplasmic side of the membrane. The chain crosses the membrane as a helical span at residues 288-308 (NALLIGVVIMALRILSCALFV). The Periplasmic segment spans residues 309–311 (NPW). The chain crosses the membrane as a helical span at residues 312–332 (IISLVKLLHAIEVPLCVISVF). Topologically, residues 333 to 342 (KYSVANFDKR) are cytoplasmic. Residues 343–363 (LSSTIFLIGFQIASSLGIVLL) form a helical membrane-spanning segment. The Periplasmic segment spans residues 364–377 (STPTGILFDHAGYQ). Residues 378–398 (TVFFAISGIVCLMLLFGIFFL) traverse the membrane as a helical segment. Topologically, residues 399-415 (SKKREQIVMETPVPSAI) are cytoplasmic.

Belongs to the major facilitator superfamily. Oligosaccharide:H(+) symporter (OHS) (TC 2.A.1.5) family.

The protein localises to the cell inner membrane. It functions in the pathway glycan biosynthesis; sucrose metabolism. Functionally, responsible for transport of sucrose into the cell, with the concomitant import of a proton (symport system). Can also transport maltose, fructose or lactulose, but not glucose, lactose or melibiose. The substrate specificity is directed toward the fructofuranosyl moiety of the substrate. The sequence is that of Sucrose permease from Escherichia coli.